A 209-amino-acid chain; its full sequence is Octanoyltransferase (209 aa).

The region spanning 30–209 (DHEPEIIYLV…IQTEFNKIFK (180 aa)) is the BPL/LPL catalytic domain. Substrate-binding positions include 69–76 (RGGKFTFH), 143–145 (AIG), and 156–158 (GVA). Cys174 functions as the Acyl-thioester intermediate in the catalytic mechanism.

It belongs to the LipB family.

The protein localises to the cytoplasm. The catalysed reaction is octanoyl-[ACP] + L-lysyl-[protein] = N(6)-octanoyl-L-lysyl-[protein] + holo-[ACP] + H(+). The protein operates within protein modification; protein lipoylation via endogenous pathway; protein N(6)-(lipoyl)lysine from octanoyl-[acyl-carrier-protein]: step 1/2. In terms of biological role, catalyzes the transfer of endogenously produced octanoic acid from octanoyl-acyl-carrier-protein onto the lipoyl domains of lipoate-dependent enzymes. Lipoyl-ACP can also act as a substrate although octanoyl-ACP is likely to be the physiological substrate. This Rickettsia africae (strain ESF-5) protein is Octanoyltransferase.